The following is a 92-amino-acid chain: Conotoxin Mr15.3 (92 aa).

Residues 1–20 form the signal peptide; sequence MSTLKMMLLILLLLLPMATF. Positions 21–53 are excised as a propeptide; it reads DSDGQAIPGGGIPSAVNSRVRGDEKSGRSLEKR.

The protein belongs to the conotoxin N superfamily. In terms of processing, contains 4 disulfide bonds. Expressed by the venom duct.

The protein resides in the secreted. In Conus marmoreus (Marble cone), this protein is Conotoxin Mr15.3.